The primary structure comprises 426 residues: Histidinol dehydrogenase (426 aa).

Residues tyrosine 125, glutamine 187, and asparagine 210 each contribute to the NAD(+) site. Substrate-binding residues include serine 233, glutamine 255, and histidine 258. Residues glutamine 255 and histidine 258 each coordinate Zn(2+). Residues glutamate 323 and histidine 324 each act as proton acceptor in the active site. Substrate contacts are provided by histidine 324, aspartate 357, glutamate 411, and histidine 416. Aspartate 357 is a Zn(2+) binding site. Histidine 416 serves as a coordination point for Zn(2+).

It belongs to the histidinol dehydrogenase family. It depends on Zn(2+) as a cofactor.

The catalysed reaction is L-histidinol + 2 NAD(+) + H2O = L-histidine + 2 NADH + 3 H(+). The protein operates within amino-acid biosynthesis; L-histidine biosynthesis; L-histidine from 5-phospho-alpha-D-ribose 1-diphosphate: step 9/9. In terms of biological role, catalyzes the sequential NAD-dependent oxidations of L-histidinol to L-histidinaldehyde and then to L-histidine. In Methanothermobacter thermautotrophicus (strain ATCC 29096 / DSM 1053 / JCM 10044 / NBRC 100330 / Delta H) (Methanobacterium thermoautotrophicum), this protein is Histidinol dehydrogenase (hisD).